Here is a 520-residue protein sequence, read N- to C-terminus: Hydroxymethylglutaryl-CoA synthase, cytoplasmic (520 aa).

Residue Ser-4 is modified to Phosphoserine. Ala-44 provides a ligand contact to (3S)-3-hydroxy-3-methylglutaryl-CoA. 44–46 (AGK) is a CoA binding site. Lys-46 carries the N6-acetyllysine modification. Glu-95 functions as the Proton donor/acceptor in the catalytic mechanism. 5 residues coordinate (3S)-3-hydroxy-3-methylglutaryl-CoA: Cys-129, Asn-167, Thr-171, Ser-221, and His-264. The active-site Acyl-thioester intermediate is Cys-129. Position 167 (Asn-167) interacts with CoA. Ser-221 provides a ligand contact to CoA. The Proton donor/acceptor role is filled by His-264. The CoA site is built by Lys-269 and Lys-273. (3S)-3-hydroxy-3-methylglutaryl-CoA contacts are provided by Lys-273, Asn-343, and Ser-377. Position 273 is an N6-acetyllysine (Lys-273). Position 476 is a phosphothreonine (Thr-476). The segment at 492–520 (HIPSPAKKVPRLPATAAEPEAAVISNGEH) is disordered. A phosphoserine mark is found at Ser-495 and Ser-516.

This sequence belongs to the thiolase-like superfamily. HMG-CoA synthase family. In terms of assembly, homodimer.

The protein resides in the cytoplasm. It carries out the reaction acetoacetyl-CoA + acetyl-CoA + H2O = (3S)-3-hydroxy-3-methylglutaryl-CoA + CoA + H(+). It functions in the pathway metabolic intermediate biosynthesis; (R)-mevalonate biosynthesis; (R)-mevalonate from acetyl-CoA: step 2/3. Functionally, catalyzes the condensation of acetyl-CoA with acetoacetyl-CoA to form HMG-CoA, which is converted by HMG-CoA reductase (HMGCR) into mevalonate, a precursor for cholesterol synthesis. In Pongo abelii (Sumatran orangutan), this protein is Hydroxymethylglutaryl-CoA synthase, cytoplasmic.